An 849-amino-acid chain; its full sequence is Glycogen phosphorylase (849 aa).

Lys679 carries the N6-(pyridoxal phosphate)lysine modification.

It belongs to the glycogen phosphorylase family. Requires pyridoxal 5'-phosphate as cofactor.

It carries out the reaction [(1-&gt;4)-alpha-D-glucosyl](n) + phosphate = [(1-&gt;4)-alpha-D-glucosyl](n-1) + alpha-D-glucose 1-phosphate. In terms of biological role, phosphorylase is an important allosteric enzyme in carbohydrate metabolism. Enzymes from different sources differ in their regulatory mechanisms and in their natural substrates. However, all known phosphorylases share catalytic and structural properties. The sequence is that of Glycogen phosphorylase (glgP) from Synechocystis sp. (strain ATCC 27184 / PCC 6803 / Kazusa).